Here is a 493-residue protein sequence, read N- to C-terminus: MTALNQLTLTEAREGLATGEFTAVELTQSYLDAMAEARTLNAYVLETADKALAMAAESDKRIASGDAGKLEGLPIGVKDMFCTDGVRTTAGSKILGDFVPPYESTVTSQLWRDGAVMLGKLNNDEFAMGSSNETSAQGPVVSPWRREGDSAPLVPGGSSGGSAAAVAAFLCAGATGTDTGGSIRQPAAFTGTVGIKPTYGRCSRFGIIAYASSLDQAGPFARTVNDAAVLLRSMAGYDPKDSTSVNRSVPDYEDAVGASIKGKRIGIPREYRVEGLDPEIAGMWEEGAQWLRDAGAEVVDISLPHTKYALPTYYIVAPAEASSNLARYDGVRYGTRVPGRDIIDMYERTRAAGFGPEVRRRIMIGTYVLSAGYYDAYYVKAQKVRTLIKRDFDDVFAQGVDAVLTPATPSPAFGIGEKGSADPVEMYLQDIFTVTVNLAGLPGISVPAGLSCKNLPLGLQLIGRPFEEETLFSLAQVVEEAAGRFPVDDLWWK.

Residues Lys-78 and Ser-158 each act as charge relay system in the active site. Ser-182 (acyl-ester intermediate) is an active-site residue.

This sequence belongs to the amidase family. GatA subfamily. In terms of assembly, heterotrimer of A, B and C subunits.

It carries out the reaction L-glutamyl-tRNA(Gln) + L-glutamine + ATP + H2O = L-glutaminyl-tRNA(Gln) + L-glutamate + ADP + phosphate + H(+). Its function is as follows. Allows the formation of correctly charged Gln-tRNA(Gln) through the transamidation of misacylated Glu-tRNA(Gln) in organisms which lack glutaminyl-tRNA synthetase. The reaction takes place in the presence of glutamine and ATP through an activated gamma-phospho-Glu-tRNA(Gln). This Azorhizobium caulinodans (strain ATCC 43989 / DSM 5975 / JCM 20966 / LMG 6465 / NBRC 14845 / NCIMB 13405 / ORS 571) protein is Glutamyl-tRNA(Gln) amidotransferase subunit A.